The primary structure comprises 320 residues: Aristolochene synthase (320 aa).

The segment covering 1–14 has biased composition (polar residues); sequence MKKPNGTNGASSSL. A disordered region spans residues 1 to 20; the sequence is MKKPNGTNGASSSLEPPPST. The Mg(2+) site is built by aspartate 90, asparagine 219, serine 223, and glutamate 227. Residues arginine 314 and tyrosine 315 each coordinate (2E,6E)-farnesyl diphosphate.

It belongs to the terpene synthase family. As to quaternary structure, homodimer. Requires Mg(2+) as cofactor.

The catalysed reaction is (2E,6E)-farnesyl diphosphate = (+)-aristolochene + diphosphate. The protein operates within sesquiterpene biosynthesis; aristolochene biosynthesis; aristolochene from farnesyl diphosphate: step 1/1. In terms of biological role, catalyzes the cyclization of trans,trans-farnesyl diphosphate (FPP) to the bicyclic sesquiterpene aristolochene. Produces germacrene A as an enzyme-bound intermediate that is not released by the enzyme, but is further cyclized to produce aristolochene. Aristolochene is the likely parent compound for a number of sesquiterpenoid toxins produced by filamentous fungi. This Aspergillus terreus protein is Aristolochene synthase (Ari1).